The chain runs to 222 residues: Methionine import system permease protein MetP (222 aa).

Residues 18-212 enclose the ABC transmembrane type-1 domain; the sequence is TYETLYMTLI…IIVFIIQIIG (195 aa). A run of 5 helical transmembrane segments spans residues 25–45, 73–93, 97–117, 152–172, and 195–215; these read TLIS…LLFL, FLIL…TILG, ALPA…EIAL, ISGI…AGAI, and FVAT…GDLI.

It belongs to the binding-protein-dependent transport system permease family. CysTW subfamily. In terms of assembly, the complex is composed of two ATP-binding proteins (MetN), two transmembrane proteins (MetP) and a solute-binding protein (MetQ).

The protein resides in the cell membrane. Part of the ABC transporter complex MetNPQ involved in methionine import. Responsible for the translocation of the substrate across the membrane. It has also been shown to be involved in methionine sulfoxide transport. The protein is Methionine import system permease protein MetP (metP) of Bacillus subtilis (strain 168).